The primary structure comprises 208 residues: Small ribosomal subunit protein uS4 (208 aa).

Residues Ser98–Asn166 enclose the S4 RNA-binding domain.

This sequence belongs to the universal ribosomal protein uS4 family. In terms of assembly, part of the 30S ribosomal subunit. Contacts protein S5. The interaction surface between S4 and S5 is involved in control of translational fidelity.

Its function is as follows. One of the primary rRNA binding proteins, it binds directly to 16S rRNA where it nucleates assembly of the body of the 30S subunit. With S5 and S12 plays an important role in translational accuracy. This chain is Small ribosomal subunit protein uS4, found in Kosmotoga olearia (strain ATCC BAA-1733 / DSM 21960 / TBF 19.5.1).